The following is a 192-amino-acid chain: Visinin (192 aa).

Gly-2 carries N-myristoyl glycine lipidation. 4 consecutive EF-hand domains span residues Thr-24–Asn-59, Glu-61–Gly-96, Lys-97–Met-132, and Asn-146–Ala-181. Asp-74, Asn-76, Asp-78, Thr-80, Glu-85, Asp-110, Asp-112, Asn-114, Glu-116, Glu-121, Asn-164, Lys-166, and Glu-171 together coordinate Ca(2+).

The protein belongs to the recoverin family. As to expression, retinal cell specific protein.

Functionally, seems to be implicated in the pathway from retinal rod guanylate cyclase to rhodopsin. May be involved in the blocking of the phosphorylation of rhodopsin. In Gallus gallus (Chicken), this protein is Visinin.